A 148-amino-acid polypeptide reads, in one-letter code: Putative nickel-responsive regulator (148 aa).

His88, His99, His101, and Cys107 together coordinate Ni(2+).

This sequence belongs to the transcriptional regulatory CopG/NikR family. It depends on Ni(2+) as a cofactor.

Its function is as follows. Transcriptional regulator. The sequence is that of Putative nickel-responsive regulator from Helicobacter acinonychis (strain Sheeba).